The sequence spans 197 residues: Ribosomal RNA large subunit methyltransferase E (197 aa).

Positions 50, 52, 67, 83, and 111 each coordinate S-adenosyl-L-methionine. Lysine 151 (proton acceptor) is an active-site residue.

It belongs to the class I-like SAM-binding methyltransferase superfamily. RNA methyltransferase RlmE family.

The protein localises to the cytoplasm. The enzyme catalyses uridine(2552) in 23S rRNA + S-adenosyl-L-methionine = 2'-O-methyluridine(2552) in 23S rRNA + S-adenosyl-L-homocysteine + H(+). In terms of biological role, specifically methylates the uridine in position 2552 of 23S rRNA at the 2'-O position of the ribose in the fully assembled 50S ribosomal subunit. In Thermoplasma volcanium (strain ATCC 51530 / DSM 4299 / JCM 9571 / NBRC 15438 / GSS1), this protein is Ribosomal RNA large subunit methyltransferase E.